The chain runs to 555 residues: Splicing factor U2af large subunit A (555 aa).

Positions 1–165 (MRDYEGNGVD…ISGFDMAPPT (165 aa)) are disordered. Basic and acidic residues-rich tracts occupy residues 23-81 (ISRD…EKDR) and 90-127 (RDRS…DRED). The segment covering 143–155 (SKSRSRSPSKSKR) has biased composition (basic residues). 3 consecutive RRM domains span residues 221–304 (RRVY…RPSD), 341–419 (DRIF…RANQ), and 460–546 (EVVT…YPEN).

It belongs to the splicing factor SR family. Expressed in stems, leaves and apical buds.

It is found in the nucleus. In terms of biological role, necessary for the splicing of pre-mRNA. Binds to the U -enriched regions of plant introns. The sequence is that of Splicing factor U2af large subunit A (U2AF65A) from Nicotiana plumbaginifolia (Leadwort-leaved tobacco).